Reading from the N-terminus, the 445-residue chain is Gamma-glutamyl phosphate reductase (445 aa).

Belongs to the gamma-glutamyl phosphate reductase family.

Its subcellular location is the cytoplasm. It catalyses the reaction L-glutamate 5-semialdehyde + phosphate + NADP(+) = L-glutamyl 5-phosphate + NADPH + H(+). Its pathway is amino-acid biosynthesis; L-proline biosynthesis; L-glutamate 5-semialdehyde from L-glutamate: step 2/2. Functionally, catalyzes the NADPH-dependent reduction of L-glutamate 5-phosphate into L-glutamate 5-semialdehyde and phosphate. The product spontaneously undergoes cyclization to form 1-pyrroline-5-carboxylate. The sequence is that of Gamma-glutamyl phosphate reductase from Persephonella marina (strain DSM 14350 / EX-H1).